The chain runs to 89 residues: Putative RING finger protein 121R (89 aa).

The RING-type zinc-finger motif lies at 45–78; it reads CPICLIAKVNTVLECTHVLCSNCVKKINVCPICR.

In Invertebrate iridescent virus 6 (IIV-6), this protein is Putative RING finger protein 121R.